A 380-amino-acid polypeptide reads, in one-letter code: All-trans-retinol dehydrogenase [NAD(+)] ADH4 (380 aa).

Position 47 (cysteine 47) interacts with Zn(2+). 48-49 (HT) serves as a coordination point for NAD(+). Positions 69, 99, 102, 105, and 113 each coordinate Zn(2+). The residue at position 121 (serine 121) is a Phosphoserine. Position 180 (cysteine 180) interacts with Zn(2+). Residues 205–210 (GLGGVG), aspartate 229, and lysine 234 each bind NAD(+). Serine 278 bears the Phosphoserine mark. Residues 298–300 (IGV), 323–325 (TFF), and arginine 375 each bind NAD(+).

This sequence belongs to the zinc-containing alcohol dehydrogenase family. Class-II subfamily. As to quaternary structure, homodimer. It depends on Zn(2+) as a cofactor.

It localises to the cytoplasm. The enzyme catalyses all-trans-retinol + NAD(+) = all-trans-retinal + NADH + H(+). It catalyses the reaction 9-cis-retinol + NAD(+) = 9-cis-retinal + NADH + H(+). It carries out the reaction 20-oxo-(5Z,8Z,11Z,14Z)-eicosatetraenoate + NAD(+) + H2O = (5Z,8Z,11Z,14Z)-eicosatetraenedioate + NADH + 2 H(+). The catalysed reaction is 20-hydroxy-(5Z,8Z,11Z,14Z)-eicosatetraenoate + NAD(+) = 20-oxo-(5Z,8Z,11Z,14Z)-eicosatetraenoate + NADH + H(+). The enzyme catalyses 1,4-benzoquinone + NADH + H(+) = hydroquinone + NAD(+). With respect to regulation, oxydation of 20-HETE is inhibited by low concentrations of N-heptylformamide. Oxydation of 20-HETE is a decreased by 55-65% by either all-trans-retinol or all-trans-retinoic acid. Strongly inhibited by omega-hydroxy fatty acids. Catalyzes the NAD-dependent oxidation of either all-trans-retinol or 9-cis-retinol. Also oxidizes long chain omega-hydroxy fatty acids, such as 20-HETE, producing both the intermediate aldehyde, 20-oxoarachidonate and the end product, a dicarboxylic acid, (5Z,8Z,11Z,14Z)-eicosatetraenedioate. Also catalyzes the reduction of benzoquinones. In Homo sapiens (Human), this protein is All-trans-retinol dehydrogenase [NAD(+)] ADH4.